A 91-amino-acid polypeptide reads, in one-letter code: Small ribosomal subunit protein uS19 (91 aa).

It belongs to the universal ribosomal protein uS19 family.

In terms of biological role, protein S19 forms a complex with S13 that binds strongly to the 16S ribosomal RNA. The chain is Small ribosomal subunit protein uS19 from Bordetella bronchiseptica (strain ATCC BAA-588 / NCTC 13252 / RB50) (Alcaligenes bronchisepticus).